The following is a 347-amino-acid chain: Protein-glutamate methylesterase/protein-glutamine glutaminase 2 (347 aa).

Positions 2–119 (RVMIVDDSAV…LGGADLYRKD (118 aa)) constitute a Response regulatory domain. Asp-52 carries the 4-aspartylphosphate modification. Residues 131-153 (AARPAPPQAAPRPTLAPPSSDPA) are disordered. A compositionally biased stretch (pro residues) spans 134–150 (PAPPQAAPRPTLAPPSS). One can recognise a CheB-type methylesterase domain in the interval 152–346 (PAGPIEAVVV…PYIASRARSV (195 aa)). Residues Ser-164, His-191, and Asp-288 contribute to the active site.

This sequence belongs to the CheB family. Phosphorylated by CheA. Phosphorylation of the N-terminal regulatory domain activates the methylesterase activity.

The protein localises to the cytoplasm. It catalyses the reaction [protein]-L-glutamate 5-O-methyl ester + H2O = L-glutamyl-[protein] + methanol + H(+). The enzyme catalyses L-glutaminyl-[protein] + H2O = L-glutamyl-[protein] + NH4(+). Functionally, involved in chemotaxis. Part of a chemotaxis signal transduction system that modulates chemotaxis in response to various stimuli. Catalyzes the demethylation of specific methylglutamate residues introduced into the chemoreceptors (methyl-accepting chemotaxis proteins or MCP) by CheR. Also mediates the irreversible deamidation of specific glutamine residues to glutamic acid. This is Protein-glutamate methylesterase/protein-glutamine glutaminase 2 from Caulobacter vibrioides (strain ATCC 19089 / CIP 103742 / CB 15) (Caulobacter crescentus).